A 930-amino-acid polypeptide reads, in one-letter code: Isoleucine--tRNA ligase (930 aa).

The 'HIGH' region motif lies at 57–67 (PYANGNIHVGH). Glutamate 554 lines the L-isoleucyl-5'-AMP pocket. The 'KMSKS' region signature appears at 595–599 (KMSKS). Lysine 598 contacts ATP. Residues cysteine 888, cysteine 891, cysteine 908, and cysteine 911 each coordinate Zn(2+).

It belongs to the class-I aminoacyl-tRNA synthetase family. IleS type 1 subfamily. As to quaternary structure, monomer. Requires Zn(2+) as cofactor.

Its subcellular location is the cytoplasm. It carries out the reaction tRNA(Ile) + L-isoleucine + ATP = L-isoleucyl-tRNA(Ile) + AMP + diphosphate. Its function is as follows. Catalyzes the attachment of isoleucine to tRNA(Ile). As IleRS can inadvertently accommodate and process structurally similar amino acids such as valine, to avoid such errors it has two additional distinct tRNA(Ile)-dependent editing activities. One activity is designated as 'pretransfer' editing and involves the hydrolysis of activated Val-AMP. The other activity is designated 'posttransfer' editing and involves deacylation of mischarged Val-tRNA(Ile). The sequence is that of Isoleucine--tRNA ligase from Streptococcus pneumoniae serotype 4 (strain ATCC BAA-334 / TIGR4).